Here is a 291-residue protein sequence, read N- to C-terminus: Ribonuclease Z (291 aa).

The Zn(2+) site is built by His61, His63, Asp65, His66, His133, Asp201, and His257. The active-site Proton acceptor is the Asp65.

This sequence belongs to the RNase Z family. Homodimer. The cofactor is Zn(2+).

It carries out the reaction Endonucleolytic cleavage of RNA, removing extra 3' nucleotides from tRNA precursor, generating 3' termini of tRNAs. A 3'-hydroxy group is left at the tRNA terminus and a 5'-phosphoryl group is left at the trailer molecule.. Zinc phosphodiesterase, which displays some tRNA 3'-processing endonuclease activity. Probably involved in tRNA maturation, by removing a 3'-trailer from precursor tRNA. This Saccharolobus islandicus (strain L.S.2.15 / Lassen #1) (Sulfolobus islandicus) protein is Ribonuclease Z.